Here is a 623-residue protein sequence, read N- to C-terminus: Pyranose 2-oxidase (623 aa).

Positions 1 to 27 are cleaved as a signal peptide; sequence MSTSSSDPFFNFTKSSFRSAAAQKASA. Residues 28-38 constitute a propeptide that is removed on maturation; sequence TSLPPLPGPDK. Position 167 is a tele-8alpha-FAD histidine (His167). 2 residues coordinate substrate: Gln448 and His450. The Proton acceptor role is filled by His548. Asn593 is a catalytic residue.

The protein belongs to the GMC oxidoreductase family. In terms of assembly, homotetramer. It depends on FAD as a cofactor. In terms of processing, not glycosylated.

Its subcellular location is the periplasm. The enzyme catalyses D-glucose + O2 = 2-dehydro-D-glucose + H2O2. Functionally, catalyzes the oxidation of various aldopyranoses and disaccharides on carbon-2 to the corresponding 2-keto sugars concomitant with the reduction of O(2) to H(2)O(2). Plays an important role in lignin degradation of wood rot fungi by supplying the essential cosubstrate H(2)O(2) for the ligninolytic peroxidases, lignin peroxidase and manganese-dependent peroxidase. The preferred substrate is D-glucose which is converted to 2-dehydro-D-glucose. Also acts on D-xylose, together with D-glucose the major sugars derived from wood, on L-sorbose, D-galactose and 1,5-anhydroglucitol, a diagnostic marker of diabetes mellitus. The protein is Pyranose 2-oxidase (P2OX) of Trametes versicolor (White-rot fungus).